The sequence spans 222 residues: UPF0758 protein YicR (222 aa).

Residues Pro-100–Ile-222 enclose the MPN domain. Zn(2+) contacts are provided by His-171, His-173, and Asp-184. Positions His-171–Asp-184 match the JAMM motif motif.

It belongs to the UPF0758 family. YicR subfamily.

The sequence is that of UPF0758 protein YicR from Escherichia coli O9:H4 (strain HS).